Consider the following 267-residue polypeptide: Hydroxyethylthiazole kinase (267 aa).

Met46 is a substrate binding site. Positions 121 and 167 each coordinate ATP. A substrate-binding site is contributed by Ala194.

It belongs to the Thz kinase family. Mg(2+) is required as a cofactor.

The enzyme catalyses 5-(2-hydroxyethyl)-4-methylthiazole + ATP = 4-methyl-5-(2-phosphooxyethyl)-thiazole + ADP + H(+). Its pathway is cofactor biosynthesis; thiamine diphosphate biosynthesis; 4-methyl-5-(2-phosphoethyl)-thiazole from 5-(2-hydroxyethyl)-4-methylthiazole: step 1/1. Functionally, catalyzes the phosphorylation of the hydroxyl group of 4-methyl-5-beta-hydroxyethylthiazole (THZ). The protein is Hydroxyethylthiazole kinase of Rhizobium johnstonii (strain DSM 114642 / LMG 32736 / 3841) (Rhizobium leguminosarum bv. viciae).